Reading from the N-terminus, the 149-residue chain is Ribosome maturation factor RimP (149 aa).

Belongs to the RimP family.

Its subcellular location is the cytoplasm. Required for maturation of 30S ribosomal subunits. In Sulfurimonas denitrificans (strain ATCC 33889 / DSM 1251) (Thiomicrospira denitrificans (strain ATCC 33889 / DSM 1251)), this protein is Ribosome maturation factor RimP.